The sequence spans 293 residues: Formamidopyrimidine-DNA glycosylase (293 aa).

The active-site Schiff-base intermediate with DNA is proline 2. Catalysis depends on glutamate 3, which acts as the Proton donor. Lysine 58 acts as the Proton donor; for beta-elimination activity in catalysis. Residues histidine 104, arginine 123, and lysine 166 each coordinate DNA. The segment at 257 to 293 (AAYDREGERCRTDGCGGAVKRFVQNGRSTFWCSGCQK) adopts an FPG-type zinc-finger fold. Arginine 283 serves as the catalytic Proton donor; for delta-elimination activity.

It belongs to the FPG family. In terms of assembly, monomer. Requires Zn(2+) as cofactor.

It carries out the reaction Hydrolysis of DNA containing ring-opened 7-methylguanine residues, releasing 2,6-diamino-4-hydroxy-5-(N-methyl)formamidopyrimidine.. The enzyme catalyses 2'-deoxyribonucleotide-(2'-deoxyribose 5'-phosphate)-2'-deoxyribonucleotide-DNA = a 3'-end 2'-deoxyribonucleotide-(2,3-dehydro-2,3-deoxyribose 5'-phosphate)-DNA + a 5'-end 5'-phospho-2'-deoxyribonucleoside-DNA + H(+). Its function is as follows. Involved in base excision repair of DNA damaged by oxidation or by mutagenic agents. Acts as a DNA glycosylase that recognizes and removes damaged bases. Has a preference for oxidized purines, such as 7,8-dihydro-8-oxoguanine (8-oxoG). Has AP (apurinic/apyrimidinic) lyase activity and introduces nicks in the DNA strand. Cleaves the DNA backbone by beta-delta elimination to generate a single-strand break at the site of the removed base with both 3'- and 5'-phosphates. This chain is Formamidopyrimidine-DNA glycosylase, found in Rhodopseudomonas palustris (strain BisB5).